The following is a 190-amino-acid chain: Nucleoside triphosphate pyrophosphatase (190 aa).

The active-site Proton acceptor is the Asp-69.

Belongs to the Maf family. Requires a divalent metal cation as cofactor.

The protein resides in the cytoplasm. The catalysed reaction is a ribonucleoside 5'-triphosphate + H2O = a ribonucleoside 5'-phosphate + diphosphate + H(+). It catalyses the reaction a 2'-deoxyribonucleoside 5'-triphosphate + H2O = a 2'-deoxyribonucleoside 5'-phosphate + diphosphate + H(+). Nucleoside triphosphate pyrophosphatase. May have a dual role in cell division arrest and in preventing the incorporation of modified nucleotides into cellular nucleic acids. In Helicobacter pylori (strain J99 / ATCC 700824) (Campylobacter pylori J99), this protein is Nucleoside triphosphate pyrophosphatase.